The chain runs to 187 residues: Putative type I specificity subunit S.MpnORF289P N-terminus (187 aa).

This sequence belongs to the type-I restriction system S methylase family. As to quaternary structure, the methyltransferase is composed of M and S polypeptides.

Functionally, the N-terminal section of a specificity (S) subunit of a type I methyltransferase (MTase); this subunit dictates DNA sequence specificity. The single R subunit has multiple frameshifts and is probably not expressed. The sequence is that of Putative type I specificity subunit S.MpnORF289P N-terminus from Mycoplasma pneumoniae (strain ATCC 29342 / M129 / Subtype 1) (Mycoplasmoides pneumoniae).